The following is a 464-amino-acid chain: ATP synthase subunit beta (464 aa).

152–159 (GGAGVGKT) is an ATP binding site.

The protein belongs to the ATPase alpha/beta chains family. As to quaternary structure, F-type ATPases have 2 components, CF(1) - the catalytic core - and CF(0) - the membrane proton channel. CF(1) has five subunits: alpha(3), beta(3), gamma(1), delta(1), epsilon(1). CF(0) has three main subunits: a(1), b(2) and c(9-12). The alpha and beta chains form an alternating ring which encloses part of the gamma chain. CF(1) is attached to CF(0) by a central stalk formed by the gamma and epsilon chains, while a peripheral stalk is formed by the delta and b chains.

The protein resides in the cell membrane. The enzyme catalyses ATP + H2O + 4 H(+)(in) = ADP + phosphate + 5 H(+)(out). Functionally, produces ATP from ADP in the presence of a proton gradient across the membrane. The catalytic sites are hosted primarily by the beta subunits. The polypeptide is ATP synthase subunit beta (Ureaplasma urealyticum serovar 10 (strain ATCC 33699 / Western)).